The sequence spans 381 residues: Acetylornithine deacetylase (381 aa).

H79 lines the Zn(2+) pocket. D81 is a catalytic residue. Residue D111 coordinates Zn(2+). Residue E143 is part of the active site. Positions 144, 168, and 354 each coordinate Zn(2+).

This sequence belongs to the peptidase M20A family. ArgE subfamily. As to quaternary structure, homodimer. Zn(2+) serves as cofactor. It depends on Co(2+) as a cofactor. Requires glutathione as cofactor.

The protein resides in the cytoplasm. It carries out the reaction N(2)-acetyl-L-ornithine + H2O = L-ornithine + acetate. Its pathway is amino-acid biosynthesis; L-arginine biosynthesis; L-ornithine from N(2)-acetyl-L-ornithine (linear): step 1/1. Catalyzes the hydrolysis of the amide bond of N(2)-acetylated L-amino acids. Cleaves the acetyl group from N-acetyl-L-ornithine to form L-ornithine, an intermediate in L-arginine biosynthesis pathway, and a branchpoint in the synthesis of polyamines. This Buchnera aphidicola subsp. Acyrthosiphon pisum (strain 5A) protein is Acetylornithine deacetylase.